Reading from the N-terminus, the 250-residue chain is Ribonuclease HII (250 aa).

One can recognise an RNase H type-2 domain in the interval 66-250; the sequence is QLVAGVDEVG…SFAPVSEYEK (185 aa). Residues Asp-72, Glu-73, and Asp-164 each contribute to the a divalent metal cation site.

Belongs to the RNase HII family. Mn(2+) serves as cofactor. Mg(2+) is required as a cofactor.

It localises to the cytoplasm. The catalysed reaction is Endonucleolytic cleavage to 5'-phosphomonoester.. Its function is as follows. Endonuclease that specifically degrades the RNA of RNA-DNA hybrids. The sequence is that of Ribonuclease HII from Lactobacillus johnsonii (strain CNCM I-12250 / La1 / NCC 533).